The chain runs to 245 residues: tRNA pseudouridine synthase A (245 aa).

The active-site Nucleophile is Asp52. Tyr111 lines the substrate pocket.

Belongs to the tRNA pseudouridine synthase TruA family. In terms of assembly, homodimer.

It carries out the reaction uridine(38/39/40) in tRNA = pseudouridine(38/39/40) in tRNA. Functionally, formation of pseudouridine at positions 38, 39 and 40 in the anticodon stem and loop of transfer RNAs. The chain is tRNA pseudouridine synthase A from Xanthobacter autotrophicus (strain ATCC BAA-1158 / Py2).